Consider the following 60-residue polypeptide: UPF0434 protein Rfer_3156 (60 aa).

This sequence belongs to the UPF0434 family.

The sequence is that of UPF0434 protein Rfer_3156 from Albidiferax ferrireducens (strain ATCC BAA-621 / DSM 15236 / T118) (Rhodoferax ferrireducens).